The primary structure comprises 763 residues: Phosphoglycerol transferase I (763 aa).

Helical transmembrane passes span 1 to 21 (MSELLSFALFLASVLIYAWKA), 26 to 46 (WWFAATLTVLGLFVVLNITLF), 77 to 97 (ILPGIGIVLGLAAVFGALGWI), and 108 to 128 (FGYSLLALLLALGSVDASPAF).

Belongs to the OpgB family.

The protein localises to the cell inner membrane. The catalysed reaction is a phosphatidylglycerol + a membrane-derived-oligosaccharide D-glucose = a 1,2-diacyl-sn-glycerol + a membrane-derived-oligosaccharide 6-(glycerophospho)-D-glucose.. The protein operates within glycan metabolism; osmoregulated periplasmic glucan (OPG) biosynthesis. Its function is as follows. Transfers a phosphoglycerol residue from phosphatidylglycerol to the membrane-bound nascent glucan backbones. This chain is Phosphoglycerol transferase I, found in Escherichia coli (strain UTI89 / UPEC).